A 226-amino-acid chain; its full sequence is 7-cyano-7-deazaguanine synthase (226 aa).

F10–A20 is a binding site for ATP. The Zn(2+) site is built by C190, C205, C208, and C211.

Belongs to the QueC family. It depends on Zn(2+) as a cofactor.

The catalysed reaction is 7-carboxy-7-deazaguanine + NH4(+) + ATP = 7-cyano-7-deazaguanine + ADP + phosphate + H2O + H(+). The protein operates within purine metabolism; 7-cyano-7-deazaguanine biosynthesis. Catalyzes the ATP-dependent conversion of 7-carboxy-7-deazaguanine (CDG) to 7-cyano-7-deazaguanine (preQ(0)). In Helicobacter pylori (strain ATCC 700392 / 26695) (Campylobacter pylori), this protein is 7-cyano-7-deazaguanine synthase.